Reading from the N-terminus, the 343-residue chain is Transcription factor BPE (343 aa).

Residues 142 to 192 (QATDSHSLAERARREKISERMKILQDLVPGCNKVIGKALVLDEIINYIQSL) form the bHLH domain.

In terms of assembly, homodimer. As to expression, specifically expressed in flowers, mostly in petals, inflorescence and flower buds. Expressed ubiquitously (leaves, flowers and stems).

It is found in the nucleus. Its function is as follows. Involved in the control of petal size, by interfering with postmitotic cell expansion to limit final petal cell size. In Arabidopsis thaliana (Mouse-ear cress), this protein is Transcription factor BPE (BPE).